The chain runs to 179 residues: Large ribosomal subunit protein uL5 (179 aa).

Belongs to the universal ribosomal protein uL5 family. In terms of assembly, part of the 50S ribosomal subunit; part of the 5S rRNA/L5/L18/L25 subcomplex. Contacts the 5S rRNA and the P site tRNA. Forms a bridge to the 30S subunit in the 70S ribosome.

Functionally, this is one of the proteins that bind and probably mediate the attachment of the 5S RNA into the large ribosomal subunit, where it forms part of the central protuberance. In the 70S ribosome it contacts protein S13 of the 30S subunit (bridge B1b), connecting the 2 subunits; this bridge is implicated in subunit movement. Contacts the P site tRNA; the 5S rRNA and some of its associated proteins might help stabilize positioning of ribosome-bound tRNAs. This chain is Large ribosomal subunit protein uL5, found in Tolumonas auensis (strain DSM 9187 / NBRC 110442 / TA 4).